The chain runs to 354 residues: D-alanine--D-alanine ligase (354 aa).

An ATP-grasp domain is found at Lys-140–Met-344. Ala-170 to Glu-225 provides a ligand contact to ATP. Residues Asp-298, Glu-311, and Asn-313 each contribute to the Mg(2+) site.

This sequence belongs to the D-alanine--D-alanine ligase family. The cofactor is Mg(2+). Mn(2+) is required as a cofactor.

The protein resides in the cytoplasm. The enzyme catalyses 2 D-alanine + ATP = D-alanyl-D-alanine + ADP + phosphate + H(+). It participates in cell wall biogenesis; peptidoglycan biosynthesis. Its function is as follows. Cell wall formation. In Blochmanniella floridana, this protein is D-alanine--D-alanine ligase.